Reading from the N-terminus, the 30-residue chain is Cyclotide hyen-C (30 aa).

The segment at residues 1 to 30 (GTHPCQETCVTSTRCSTQGCHCNWPICFKN) is a cross-link (cyclopeptide (Gly-Asn)). Cystine bridges form between Cys-5/Cys-20, Cys-9/Cys-22, and Cys-15/Cys-27.

In terms of processing, this is a cyclic peptide. As to expression, detected in stems (at protein level).

Probably participates in a plant defense mechanism. Does not display any cytotoxic activity towards K562, HeLa, MCF-7, HUVEC or red blood cells. Does not bind to phospholipd membranes containing 1-palmitoyl 2-oleoyl phosphatidylcholine (POPC) or 1-palmitoyl-2-oleophosphatidylethanolamine (POPE). This is Cyclotide hyen-C from Pigea enneasperma (Spade flower).